The sequence spans 210 residues: FMN-dependent NADH:quinone oxidoreductase 9 (210 aa).

Residues Ser-10 and Ser-16 to Ser-18 contribute to the FMN site.

This sequence belongs to the azoreductase type 1 family. As to quaternary structure, homodimer. FMN is required as a cofactor.

The enzyme catalyses 2 a quinone + NADH + H(+) = 2 a 1,4-benzosemiquinone + NAD(+). It carries out the reaction N,N-dimethyl-1,4-phenylenediamine + anthranilate + 2 NAD(+) = 2-(4-dimethylaminophenyl)diazenylbenzoate + 2 NADH + 2 H(+). Quinone reductase that provides resistance to thiol-specific stress caused by electrophilic quinones. Functionally, also exhibits azoreductase activity. Catalyzes the reductive cleavage of the azo bond in aromatic azo compounds to the corresponding amines. The sequence is that of FMN-dependent NADH:quinone oxidoreductase 9 from Burkholderia lata (strain ATCC 17760 / DSM 23089 / LMG 22485 / NCIMB 9086 / R18194 / 383).